The primary structure comprises 325 residues: DNA-directed RNA polymerase subunit alpha (325 aa).

The tract at residues 1–239 (MQQFLRYNIN…DHLKPLIDIN (239 aa)) is alpha N-terminal domain (alpha-NTD). The interval 255–325 (EKNKKLSIPI…ELYDLKLKNN (71 aa)) is alpha C-terminal domain (alpha-CTD).

Belongs to the RNA polymerase alpha chain family. As to quaternary structure, homodimer. The RNAP catalytic core consists of 2 alpha, 1 beta, 1 beta' and 1 omega subunit. When a sigma factor is associated with the core the holoenzyme is formed, which can initiate transcription.

The enzyme catalyses RNA(n) + a ribonucleoside 5'-triphosphate = RNA(n+1) + diphosphate. In terms of biological role, DNA-dependent RNA polymerase catalyzes the transcription of DNA into RNA using the four ribonucleoside triphosphates as substrates. The polypeptide is DNA-directed RNA polymerase subunit alpha (Mycoplasmoides gallisepticum (strain R(low / passage 15 / clone 2)) (Mycoplasma gallisepticum)).